The primary structure comprises 438 residues: Adenylosuccinate synthetase (438 aa).

GTP contacts are provided by residues 13-19 and 41-43; these read GDEGKGK and GHT. Asp-14 functions as the Proton acceptor in the catalytic mechanism. The Mg(2+) site is built by Asp-14 and Gly-41. IMP contacts are provided by residues 14–17, 39–42, Thr-130, Arg-144, Gln-225, Thr-240, and Arg-312; these read DEGK and NAGH. Catalysis depends on His-42, which acts as the Proton donor. A substrate-binding site is contributed by 308 to 314; it reads ATTGRQR. Residues Arg-314, 340–342, and 422–424 contribute to the GTP site; these read KLD and STG.

This sequence belongs to the adenylosuccinate synthetase family. Homodimer. Mg(2+) is required as a cofactor.

It is found in the cytoplasm. The catalysed reaction is IMP + L-aspartate + GTP = N(6)-(1,2-dicarboxyethyl)-AMP + GDP + phosphate + 2 H(+). Its pathway is purine metabolism; AMP biosynthesis via de novo pathway; AMP from IMP: step 1/2. Its function is as follows. Plays an important role in the de novo pathway of purine nucleotide biosynthesis. Catalyzes the first committed step in the biosynthesis of AMP from IMP. The sequence is that of Adenylosuccinate synthetase from Vesicomyosocius okutanii subsp. Calyptogena okutanii (strain HA).